A 557-amino-acid polypeptide reads, in one-letter code: Urocanate hydratase (557 aa).

The disordered stretch occupies residues 1–20 (MSNPRHNEREVRSPRGDELN). NAD(+) contacts are provided by residues 52–53 (GG), Q130, 176–178 (GMG), E196, R201, 242–243 (NA), 263–267 (QTSAH), 273–274 (YL), and Y322. C410 is an active-site residue. Position 492 (G492) interacts with NAD(+).

Belongs to the urocanase family. The cofactor is NAD(+).

The protein localises to the cytoplasm. The enzyme catalyses 4-imidazolone-5-propanoate = trans-urocanate + H2O. Its pathway is amino-acid degradation; L-histidine degradation into L-glutamate; N-formimidoyl-L-glutamate from L-histidine: step 2/3. Catalyzes the conversion of urocanate to 4-imidazolone-5-propionate. The chain is Urocanate hydratase from Brucella abortus (strain S19).